The following is a 465-amino-acid chain: ATP synthase subunit beta (465 aa).

Residue 149 to 156 (GGAGVGKT) participates in ATP binding.

This sequence belongs to the ATPase alpha/beta chains family. F-type ATPases have 2 components, CF(1) - the catalytic core - and CF(0) - the membrane proton channel. CF(1) has five subunits: alpha(3), beta(3), gamma(1), delta(1), epsilon(1). CF(0) has three main subunits: a(1), b(2) and c(9-12). The alpha and beta chains form an alternating ring which encloses part of the gamma chain. CF(1) is attached to CF(0) by a central stalk formed by the gamma and epsilon chains, while a peripheral stalk is formed by the delta and b chains.

The protein resides in the cell inner membrane. It carries out the reaction ATP + H2O + 4 H(+)(in) = ADP + phosphate + 5 H(+)(out). Its function is as follows. Produces ATP from ADP in the presence of a proton gradient across the membrane. The catalytic sites are hosted primarily by the beta subunits. This Dictyoglomus thermophilum (strain ATCC 35947 / DSM 3960 / H-6-12) protein is ATP synthase subunit beta.